Here is a 256-residue protein sequence, read N- to C-terminus: Gluconate 5-dehydrogenase (256 aa).

Position 15–39 (Leu-15–Val-39) interacts with NADP(+). Ser-147 lines the substrate pocket. The active-site Proton acceptor is Tyr-160.

The protein belongs to the short-chain dehydrogenases/reductases (SDR) family. In terms of assembly, homodimer.

The protein localises to the cytoplasm. The enzyme catalyses D-gluconate + NADP(+) = 5-dehydro-D-gluconate + NADPH + H(+). Its function is as follows. Catalyzes the reversible NADP-dependent oxidation of gluconate to 5-ketogluconate. Is involved in the non-phosphorylative, ketogenic oxidation of glucose. Is almost inactive with NAD as cosubstrate. Displays high substrate specificity since D-Glucose, D-sorbitol, and D-mannitol are not oxidized by the enzyme, and 2-ketogluconate and L-sorbose are not reduced. Can accept D-fructose as a substrate, with a rate that is only 10% of the rate of 5-ketogluconate reduction. The sequence is that of Gluconate 5-dehydrogenase from Gluconobacter oxydans (strain 621H) (Gluconobacter suboxydans).